A 171-amino-acid chain; its full sequence is MVLGQPINIIKWIEENGDLLKPPVNNFCLHRGGFTIMIVGGPNERSDYHINQTPEYFYQFKGTMCLKVVDDGEFKDIFINEGDSFLLPPNVPHNPCRYENTIGIVVEQDRPAGVNDKVRWYCQKCQTVIHEVEFYLTDLGTQIKEAIVKFDADLDARTCKNCGTVNSSRRD.

R45 lines the O2 pocket. H49, E55, and H93 together coordinate Fe cation. E55 contributes to the substrate binding site. Positions 97 and 107 each coordinate substrate. Positions 122, 125, 159, and 162 each coordinate a divalent metal cation.

This sequence belongs to the 3-HAO family. Requires Fe(2+) as cofactor.

The protein localises to the cytoplasm. The enzyme catalyses 3-hydroxyanthranilate + O2 = (2Z,4Z)-2-amino-3-carboxymuconate 6-semialdehyde. It participates in cofactor biosynthesis; NAD(+) biosynthesis; quinolinate from L-kynurenine: step 3/3. Its function is as follows. Catalyzes the oxidative ring opening of 3-hydroxyanthranilate to 2-amino-3-carboxymuconate semialdehyde, which spontaneously cyclizes to quinolinate. The polypeptide is 3-hydroxyanthranilate 3,4-dioxygenase (Candida albicans (strain SC5314 / ATCC MYA-2876) (Yeast)).